The chain runs to 399 residues: Argininosuccinate synthase (399 aa).

ATP is bound by residues 10 to 18 and Ala38; that span reads AYSGGVDTS. Residue Tyr89 participates in L-citrulline binding. Gly119 lines the ATP pocket. Residues Thr121, Asn125, and Asp126 each contribute to the L-aspartate site. Asn125 is a binding site for L-citrulline. Residues Arg129, Ser177, Ser186, Glu262, and Tyr274 each contribute to the L-citrulline site.

The protein belongs to the argininosuccinate synthase family. Type 1 subfamily. Homotetramer.

The protein resides in the cytoplasm. The enzyme catalyses L-citrulline + L-aspartate + ATP = 2-(N(omega)-L-arginino)succinate + AMP + diphosphate + H(+). Its pathway is amino-acid biosynthesis; L-arginine biosynthesis; L-arginine from L-ornithine and carbamoyl phosphate: step 2/3. This chain is Argininosuccinate synthase, found in Acaryochloris marina (strain MBIC 11017).